We begin with the raw amino-acid sequence, 465 residues long: D(1C) dopamine receptor (465 aa).

At 1 to 30 (MENFSIFNVTVNVWHADLDVGNSDLSLRAL) the chain is on the extracellular side. Residues N3 and N8 are each glycosylated (N-linked (GlcNAc...) asparagine). Residues 31–54 (TGLLLSLLILSTLLGNTLVCLAVI) traverse the membrane as a helical segment. Over 55-65 (KFRHLRSKVTN) the chain is Cytoplasmic. A helical transmembrane segment spans residues 66 to 92 (FFVISLAVSDLFVALLVMPWKAVTEVA). The Extracellular segment spans residues 93-101 (GFWVFGDFC). C101 and C187 are joined by a disulfide. Residues 102 to 124 (DTWVAFDIMCSTASILNLCIISL) traverse the membrane as a helical segment. Residues 125–143 (DRYWAIASPFRYERKMTQR) are Cytoplasmic-facing. Residues 144-168 (VAFIMIGVAWTLSILISFIPVQLSW) traverse the membrane as a helical segment. The Extracellular segment spans residues 169-193 (HKSHEADEELNGVNHTENCDSSLNR). The helical transmembrane segment at 194-219 (TYAISSSLISFYIPVVIMIGTYTRIY) threads the bilayer. Over 220 to 264 (RIAQTQIRRISSLERAVEHAQRCSSRLSNENSLKTSFRKETKVLK) the chain is Cytoplasmic. The helical transmembrane segment at 265–291 (TLSIIMGVFVFCWLPFFVLNCMIPFCH) threads the bilayer. Residues 292-309 (MNLPGQNEPEPPCVSETT) lie on the Extracellular side of the membrane. A helical transmembrane segment spans residues 310–334 (FNIFVWFGWANSSLNPVIYAFNADF). Over 335–465 (RKAFTTILGC…EDRHYTTKLY (131 aa)) the chain is Cytoplasmic. Residue C344 is the site of S-palmitoyl cysteine attachment.

The protein belongs to the G-protein coupled receptor 1 family. Brain and kidney.

The protein resides in the cell membrane. It is found in the cell projection. It localises to the cilium membrane. Its function is as follows. This is one of the five types (D1 to D5) of receptors for dopamine. The activity of this receptor is mediated by G proteins which activate adenylyl cyclase. The polypeptide is D(1C) dopamine receptor (drd1c) (Xenopus laevis (African clawed frog)).